Reading from the N-terminus, the 449-residue chain is Alpha-L-fucosidase (449 aa).

The N-terminal stretch at 1-19 (MGLLLLLSLLSACFQPRYA) is a signal peptide. N-linked (GlcNAc...) asparagine glycans are attached at residues Asn156, Asn224, Asn362, and Asn375.

This sequence belongs to the glycosyl hydrolase 29 family. In terms of assembly, homotetramer.

It is found in the secreted. It catalyses the reaction an alpha-L-fucoside + H2O = L-fucose + an alcohol. In terms of biological role, alpha-L-fucosidase is responsible for hydrolyzing the alpha-1,6-linked fucose joined to the reducing-end N-acetylglucosamine of the carbohydrate moieties of glycoproteins. The chain is Alpha-L-fucosidase from Branchiostoma floridae (Florida lancelet).